The chain runs to 181 residues: ATP synthase subunit delta (181 aa).

It belongs to the ATPase delta chain family. As to quaternary structure, F-type ATPases have 2 components, F(1) - the catalytic core - and F(0) - the membrane proton channel. F(1) has five subunits: alpha(3), beta(3), gamma(1), delta(1), epsilon(1). F(0) has three main subunits: a(1), b(2) and c(10-14). The alpha and beta chains form an alternating ring which encloses part of the gamma chain. F(1) is attached to F(0) by a central stalk formed by the gamma and epsilon chains, while a peripheral stalk is formed by the delta and b chains.

The protein resides in the cell inner membrane. F(1)F(0) ATP synthase produces ATP from ADP in the presence of a proton or sodium gradient. F-type ATPases consist of two structural domains, F(1) containing the extramembraneous catalytic core and F(0) containing the membrane proton channel, linked together by a central stalk and a peripheral stalk. During catalysis, ATP synthesis in the catalytic domain of F(1) is coupled via a rotary mechanism of the central stalk subunits to proton translocation. Functionally, this protein is part of the stalk that links CF(0) to CF(1). It either transmits conformational changes from CF(0) to CF(1) or is implicated in proton conduction. The sequence is that of ATP synthase subunit delta from Chlorobium luteolum (strain DSM 273 / BCRC 81028 / 2530) (Pelodictyon luteolum).